The chain runs to 689 residues: Probable serine/threonine-protein kinase abkC (689 aa).

Positions 42-79 (NNSGNENYKNFNYNYKNKNNYNNNNNNNNSNSSSNNNG) are disordered. The Protein kinase domain maps to 257–689 (WFDEEPMASG…NNKNNNEKNK (433 aa)). ATP is bound by residues 263-271 (MASGSVAQV) and lysine 285. The Proton acceptor role is filled by aspartate 417. Positions 652–689 (KQLNNDNNNNNNNNNNNKNNNDNNNKNNNNKNNNEKNK) are disordered. The segment covering 655–683 (NNDNNNNNNNNNNNKNNNDNNNKNNNNKN) has biased composition (low complexity).

Belongs to the protein kinase superfamily. ADCK protein kinase family.

In Dictyostelium discoideum (Social amoeba), this protein is Probable serine/threonine-protein kinase abkC (abkC).